The following is a 172-amino-acid chain: Xanthine-guanine phosphoribosyltransferase (172 aa).

5-phospho-alpha-D-ribose 1-diphosphate contacts are provided by residues 47-48 and 106-114; these read RG and DDLVDTGKT. Mg(2+) is bound at residue Asp107. 2 residues coordinate guanine: Asp110 and Ile153. Xanthine is bound by residues Asp110 and Ile153. Residues 110-114 and 152-153 each bind GMP; these read DTGKT and WI.

The protein belongs to the purine/pyrimidine phosphoribosyltransferase family. XGPT subfamily. As to quaternary structure, homotetramer. Mg(2+) is required as a cofactor.

It is found in the cell inner membrane. The catalysed reaction is GMP + diphosphate = guanine + 5-phospho-alpha-D-ribose 1-diphosphate. It carries out the reaction XMP + diphosphate = xanthine + 5-phospho-alpha-D-ribose 1-diphosphate. The enzyme catalyses IMP + diphosphate = hypoxanthine + 5-phospho-alpha-D-ribose 1-diphosphate. Its pathway is purine metabolism; GMP biosynthesis via salvage pathway; GMP from guanine: step 1/1. The protein operates within purine metabolism; XMP biosynthesis via salvage pathway; XMP from xanthine: step 1/1. Functionally, purine salvage pathway enzyme that catalyzes the transfer of the ribosyl-5-phosphate group from 5-phospho-alpha-D-ribose 1-diphosphate (PRPP) to the N9 position of the 6-oxopurines guanine and xanthine to form the corresponding ribonucleotides GMP (guanosine 5'-monophosphate) and XMP (xanthosine 5'-monophosphate), with the release of PPi. To a lesser extent, also acts on hypoxanthine. The sequence is that of Xanthine-guanine phosphoribosyltransferase from Rhodopseudomonas palustris (strain BisB5).